Here is a 384-residue protein sequence, read N- to C-terminus: Cysteine desulfurase (384 aa).

Residues 74 to 75, N154, Q180, and 200 to 202 contribute to the pyridoxal 5'-phosphate site; these read GT and SGH. An N6-(pyridoxal phosphate)lysine modification is found at K203. T238 contacts pyridoxal 5'-phosphate. C325 serves as the catalytic Cysteine persulfide intermediate. Position 325 (C325) interacts with [2Fe-2S] cluster.

This sequence belongs to the class-V pyridoxal-phosphate-dependent aminotransferase family. NifS/IscS subfamily. Homodimer. It depends on pyridoxal 5'-phosphate as a cofactor.

The enzyme catalyses (sulfur carrier)-H + L-cysteine = (sulfur carrier)-SH + L-alanine. In terms of biological role, catalyzes the removal of elemental sulfur atoms from cysteine to produce alanine. Seems to participate in the biosynthesis of the nitrogenase metalloclusters by providing the inorganic sulfur required for the Fe-S core formation. The protein is Cysteine desulfurase of Rhodobacter capsulatus (Rhodopseudomonas capsulata).